Reading from the N-terminus, the 260-residue chain is Snake venom serine protease Dav-X (260 aa).

Positions 1-18 (MVLIRVLANLLILQLSYA) are cleaved as a signal peptide. A propeptide spanning residues 19–24 (QKSSEL) is cleaved from the precursor. Positions 25–251 (VIGGVECDIN…YTDWIQNIIA (227 aa)) constitute a Peptidase S1 domain. 6 cysteine pairs are disulfide-bonded: Cys-31–Cys-165, Cys-52–Cys-68, Cys-102–Cys-258, Cys-144–Cys-212, Cys-176–Cys-191, and Cys-202–Cys-227. The Charge relay system role is filled by His-67. The N-linked (GlcNAc...) asparagine glycan is linked to Asn-81. Residue Asp-112 is the Charge relay system of the active site. Residues Asn-124 and Asn-172 are each glycosylated (N-linked (GlcNAc...) asparagine). Ser-206 (charge relay system) is an active-site residue. An N-linked (GlcNAc...) asparagine glycan is attached at Asn-241.

It belongs to the peptidase S1 family. Snake venom subfamily. As to quaternary structure, monomer. In terms of tissue distribution, expressed by the venom gland.

Its subcellular location is the secreted. Snake venom serine protease that may act in the hemostasis system of the prey. In Deinagkistrodon acutus (Hundred-pace snake), this protein is Snake venom serine protease Dav-X.